The primary structure comprises 181 residues: HGPRTase-like protein 2 (181 aa).

Belongs to the purine/pyrimidine phosphoribosyltransferase family. Archaeal HPRT subfamily.

May catalyze a purine salvage reaction, the substrate is unknown. This Haloferax volcanii (strain ATCC 29605 / DSM 3757 / JCM 8879 / NBRC 14742 / NCIMB 2012 / VKM B-1768 / DS2) (Halobacterium volcanii) protein is HGPRTase-like protein 2.